We begin with the raw amino-acid sequence, 100 residues long: MIREERLLKVILAPHISEKSTVNAEKHNTVVFRVAIDATKAEIKAAVAKLFEVEVESVRTLVSKGKTKRTGGRTGRRSDWKKAYVTLAAGADIDFVGGAE.

The protein belongs to the universal ribosomal protein uL23 family. As to quaternary structure, part of the 50S ribosomal subunit. Contacts protein L29, and trigger factor when it is bound to the ribosome.

One of the early assembly proteins it binds 23S rRNA. One of the proteins that surrounds the polypeptide exit tunnel on the outside of the ribosome. Forms the main docking site for trigger factor binding to the ribosome. This chain is Large ribosomal subunit protein uL23, found in Shewanella oneidensis (strain ATCC 700550 / JCM 31522 / CIP 106686 / LMG 19005 / NCIMB 14063 / MR-1).